We begin with the raw amino-acid sequence, 98 residues long: Large ribosomal subunit protein uL23 (98 aa).

The protein belongs to the universal ribosomal protein uL23 family. Part of the 50S ribosomal subunit. Contacts protein L29, and trigger factor when it is bound to the ribosome.

In terms of biological role, one of the early assembly proteins it binds 23S rRNA. One of the proteins that surrounds the polypeptide exit tunnel on the outside of the ribosome. Forms the main docking site for trigger factor binding to the ribosome. The protein is Large ribosomal subunit protein uL23 of Bordetella petrii (strain ATCC BAA-461 / DSM 12804 / CCUG 43448).